The primary structure comprises 641 residues: 1-deoxy-D-xylulose-5-phosphate synthase (641 aa).

Thiamine diphosphate-binding positions include His79 and 120–122; that span reads GHS. Asp151 provides a ligand contact to Mg(2+). Thiamine diphosphate is bound by residues 152–153, Asn180, Tyr291, and Glu375; that span reads GS. Asn180 serves as a coordination point for Mg(2+).

The protein belongs to the transketolase family. DXPS subfamily. As to quaternary structure, homodimer. The cofactor is Mg(2+). Requires thiamine diphosphate as cofactor.

It catalyses the reaction D-glyceraldehyde 3-phosphate + pyruvate + H(+) = 1-deoxy-D-xylulose 5-phosphate + CO2. The protein operates within metabolic intermediate biosynthesis; 1-deoxy-D-xylulose 5-phosphate biosynthesis; 1-deoxy-D-xylulose 5-phosphate from D-glyceraldehyde 3-phosphate and pyruvate: step 1/1. Functionally, catalyzes the acyloin condensation reaction between C atoms 2 and 3 of pyruvate and glyceraldehyde 3-phosphate to yield 1-deoxy-D-xylulose-5-phosphate (DXP). The chain is 1-deoxy-D-xylulose-5-phosphate synthase from Nitratidesulfovibrio vulgaris (strain ATCC 29579 / DSM 644 / CCUG 34227 / NCIMB 8303 / VKM B-1760 / Hildenborough) (Desulfovibrio vulgaris).